The primary structure comprises 351 residues: uncharacterized protein (351 aa).

Mn(2+) is bound by residues aspartate 215, aspartate 226, histidine 290, glutamate 319, and glutamate 333.

It belongs to the peptidase M24B family. The cofactor is Mn(2+).

This is an uncharacterized protein from Staphylococcus haemolyticus (strain JCSC1435).